The primary structure comprises 396 residues: Major outer membrane porin, serovar A (396 aa).

An N-terminal signal peptide occupies residues 1-22; sequence MKKLLKSVLVFAALSSASSLQA.

This sequence belongs to the chlamydial porin (CP) (TC 1.B.2) family. As to quaternary structure, part of a disulfide cross-linked outer membrane complex (COMC) composed of the major outer membrane porin (MOMP), the small cysteine-rich protein (OmcA) and the large cysteine-rich periplasmic protein (OmcB).

It is found in the cell outer membrane. Functionally, in elementary bodies (EBs, the infectious stage, which is able to survive outside the host cell) provides the structural integrity of the outer envelope through disulfide cross-links with the small cysteine-rich protein and the large cysteine-rich periplasmic protein. It has been described in publications as the Sarkosyl-insoluble COMC (Chlamydia outer membrane complex), and serves as the functional equivalent of peptidoglycan. In terms of biological role, permits diffusion of specific solutes through the outer membrane. This Chlamydia trachomatis protein is Major outer membrane porin, serovar A (ompA).